A 188-amino-acid chain; its full sequence is Elongation factor P (188 aa).

N6-(3,6-diaminohexanoyl)-5-hydroxylysine is present on Lys-34.

It belongs to the elongation factor P family. Post-translationally, may be beta-lysylated on the epsilon-amino group of Lys-34 by the combined action of EpmA and EpmB, and then hydroxylated on the C5 position of the same residue by EpmC (if this protein is present). Lysylation is critical for the stimulatory effect of EF-P on peptide-bond formation. The lysylation moiety may extend toward the peptidyltransferase center and stabilize the terminal 3-CCA end of the tRNA. Hydroxylation of the C5 position on Lys-34 may allow additional potential stabilizing hydrogen-bond interactions with the P-tRNA.

It localises to the cytoplasm. The protein operates within protein biosynthesis; polypeptide chain elongation. Involved in peptide bond synthesis. Alleviates ribosome stalling that occurs when 3 or more consecutive Pro residues or the sequence PPG is present in a protein, possibly by augmenting the peptidyl transferase activity of the ribosome. Modification of Lys-34 is required for alleviation. The polypeptide is Elongation factor P (Stenotrophomonas maltophilia (strain R551-3)).